A 186-amino-acid polypeptide reads, in one-letter code: Elongation factor P (186 aa).

This sequence belongs to the elongation factor P family.

The protein localises to the cytoplasm. The protein operates within protein biosynthesis; polypeptide chain elongation. Involved in peptide bond synthesis. Stimulates efficient translation and peptide-bond synthesis on native or reconstituted 70S ribosomes in vitro. Probably functions indirectly by altering the affinity of the ribosome for aminoacyl-tRNA, thus increasing their reactivity as acceptors for peptidyl transferase. This chain is Elongation factor P, found in Thiobacillus denitrificans (strain ATCC 25259 / T1).